The following is a 114-amino-acid chain: Large ribosomal subunit protein bL20c (114 aa).

It belongs to the bacterial ribosomal protein bL20 family.

The protein resides in the plastid. It localises to the chloroplast. Binds directly to 23S ribosomal RNA and is necessary for the in vitro assembly process of the 50S ribosomal subunit. It is not involved in the protein synthesizing functions of that subunit. This chain is Large ribosomal subunit protein bL20c (rpl20), found in Guillardia theta (Cryptophyte).